The sequence spans 199 residues: uncharacterized protein (199 aa).

Helical transmembrane passes span 41 to 61, 72 to 92, 109 to 129, and 145 to 165; these read LFIPPSACRIDLSVFPWAFIC, SLICSPCFSTVWVSLLICSPW, TVWVNLLICSPWAAKVVSIFV, and VTYSVFTGITGLLSLNCLLNL.

To M.pneumoniae MPN_037.

The protein resides in the cell membrane. This is an uncharacterized protein from Mycoplasma pneumoniae (strain ATCC 29342 / M129 / Subtype 1) (Mycoplasmoides pneumoniae).